Consider the following 843-residue polypeptide: INO80 complex subunit D-B (843 aa).

Residues 159 to 175 (TLNHKQKQQDHSVDTNH) show a composition bias toward basic and acidic residues. Disordered regions lie at residues 159–216 (TLNH…PTVR), 221–240 (FKTSSSLQDTHQGSKDSTDN), 503–550 (YHHH…LPQG), 695–726 (SLLHPSEDAFPPSPPSPQPPLTPPSSVGHLTD), and 791–843 (LSTP…TAAP). Composition is skewed to polar residues over residues 176–187 (LRTSSLPSTLSH), 197–216 (RATQTPINPSSPRAATPTVR), and 221–231 (FKTSSSLQDTH). Basic residues predominate over residues 503–540 (YHHHQQIQRHRPLKKAKPPALSKKHKKKGKRGTQRRPQ). Over residues 705-717 (PPSPPSPQPPLTP) the composition is skewed to pro residues. The span at 796–821 (QPSSALSALPQSSQTRSTTTSPTSQT) shows a compositional bias: low complexity.

Belongs to the INO80D family. In terms of assembly, component of the chromatin-remodeling INO80 complex.

The protein resides in the nucleus. In terms of biological role, putative regulatory component of the chromatin remodeling INO80 complex which is involved in transcriptional regulation, DNA replication and probably DNA repair. The chain is INO80 complex subunit D-B (ino80db) from Danio rerio (Zebrafish).